Reading from the N-terminus, the 156-residue chain is 3-dehydroquinate dehydratase 1 (156 aa).

The Proton acceptor role is filled by Tyr32. Substrate contacts are provided by Asn84, His90, and Asp97. His110 serves as the catalytic Proton donor. Substrate-binding positions include Leu111–Ser112 and Arg121.

Belongs to the type-II 3-dehydroquinase family. As to quaternary structure, homododecamer.

It carries out the reaction 3-dehydroquinate = 3-dehydroshikimate + H2O. Its pathway is metabolic intermediate biosynthesis; chorismate biosynthesis; chorismate from D-erythrose 4-phosphate and phosphoenolpyruvate: step 3/7. Catalyzes a trans-dehydration via an enolate intermediate. This Ralstonia nicotianae (strain ATCC BAA-1114 / GMI1000) (Ralstonia solanacearum) protein is 3-dehydroquinate dehydratase 1 (aroQ1).